Here is a 582-residue protein sequence, read N- to C-terminus: Tetratricopeptide repeat protein 24 (582 aa).

The segment at 1–31 (MSSPNPEDVPRRPEPEPSSSNKKKKKRKWLR) is disordered. 8 TPR repeats span residues 36–69 (IQAL…ASKA), 79–112 (QACA…EKAQ), 117–150 (GDQC…YQPQ), 154–187 (GEAW…YAQE), 236–271 (GHLY…VPGE), 273–306 (ATVL…HGSV), 313–346 (GRSF…ARDS), and 353–386 (WQAC…CQKE). Disordered stretches follow at residues 418-481 (TSAP…RAGP) and 548-582 (VPNG…CTIV). Residues 441 to 454 (GSSTAGVQHRSSSG) are compositionally biased toward polar residues. The span at 462–472 (EGHQKKKEERS) shows a compositional bias: basic and acidic residues.

The sequence is that of Tetratricopeptide repeat protein 24 (TTC24) from Homo sapiens (Human).